A 172-amino-acid chain; its full sequence is MNPFRWGFRAQFLLGFLACAGLLAYAIYVQLHLGLEPCPLCIFQRIAFATLALLFLLGALHGPRGAGGRKAYGVLAFIAAGVGMGIAARHVWVQIRPKDMMSSCGPPLSFLSETMGPFEVFRTVLTGTGDCGNIDWRFLGLSMPMWSMVWFVGLALWALYAGFKHRGPRKLF.

The Cytoplasmic segment spans residues Met1–Gln11. The helical transmembrane segment at Phe12 to Tyr28 threads the bilayer. Residues Val29–Ile46 lie on the Periplasmic side of the membrane. A disulfide bridge connects residues Cys38 and Cys41. Residues Ala47–Pro63 traverse the membrane as a helical segment. Over Arg64 to Lys70 the chain is Cytoplasmic. Residues Ala71 to Ala88 traverse the membrane as a helical segment. Residues Arg89 to Met145 are Periplasmic-facing. A disulfide bridge connects residues Cys104 and Cys131. Residues Trp146–Lys164 traverse the membrane as a helical segment. Residues His165–Phe172 are Cytoplasmic-facing.

The protein belongs to the DsbB family.

It is found in the cell inner membrane. Functionally, required for disulfide bond formation in some periplasmic proteins. Acts by oxidizing the DsbA protein. In Xanthomonas campestris pv. campestris (strain 8004), this protein is Disulfide bond formation protein B.